A 692-amino-acid polypeptide reads, in one-letter code: Elongation factor G 2 (692 aa).

One can recognise a tr-type G domain in the interval 8–283; sequence EKTRNIGIMA…AVIDYMPSPV (276 aa). GTP-binding positions include 17-24, 81-85, and 135-138; these read AHIDAGKT, DTPGH, and NKMD.

The protein belongs to the TRAFAC class translation factor GTPase superfamily. Classic translation factor GTPase family. EF-G/EF-2 subfamily.

The protein localises to the cytoplasm. In terms of biological role, catalyzes the GTP-dependent ribosomal translocation step during translation elongation. During this step, the ribosome changes from the pre-translocational (PRE) to the post-translocational (POST) state as the newly formed A-site-bound peptidyl-tRNA and P-site-bound deacylated tRNA move to the P and E sites, respectively. Catalyzes the coordinated movement of the two tRNA molecules, the mRNA and conformational changes in the ribosome. The sequence is that of Elongation factor G 2 from Syntrophotalea carbinolica (strain DSM 2380 / NBRC 103641 / GraBd1) (Pelobacter carbinolicus).